Here is a 625-residue protein sequence, read N- to C-terminus: Interferon-induced GTP-binding protein MxE (625 aa).

One can recognise a Dynamin-type G domain in the interval 40–313 (DLNLPAIAVI…LVEHIAKNLP (274 aa)). A G1 motif region spans residues 50 to 57 (GDQSSGKS). Residue 50–57 (GDQSSGKS) coordinates GTP. Residues 75 to 77 (VTR) form a G2 motif region. The interval 151–154 (DLPG) is G3 motif. GTP-binding positions include 151–155 (DLPGI) and 220–223 (TKPD). The G4 motif stretch occupies residues 220–223 (TKPD). Positions 252 to 255 (KCRG) are G5 motif. The 90-residue stretch at 536-625 (VREMAYHLTS…RVLSKFVHSA (90 aa)) folds into the GED domain.

Belongs to the TRAFAC class dynamin-like GTPase superfamily. Dynamin/Fzo/YdjA family.

Its subcellular location is the cytoplasm. The chain is Interferon-induced GTP-binding protein MxE (mxe) from Danio rerio (Zebrafish).